The following is a 215-amino-acid chain: Redox-sensing transcriptional repressor Rex (215 aa).

Positions 18 to 57 (LYYRFLKNLHASGKQRVSSAELSDAVKVDSATIRRDFSYF) form a DNA-binding region, H-T-H motif. Residue 92–97 (GVGNLG) participates in NAD(+) binding.

This sequence belongs to the transcriptional regulatory Rex family. Homodimer.

The protein localises to the cytoplasm. Modulates transcription in response to changes in cellular NADH/NAD(+) redox state. The protein is Redox-sensing transcriptional repressor Rex of Bacillus subtilis (strain 168).